The following is a 552-amino-acid chain: MTKYVFVTGGVVSSLGKGIAAASLAAILESRGLKVTLLKLDPYINVDPGTMSPFQHGEVFVTEDGAETDLDLGHYERFISTKMRKANNFTTGQIYESVIRKERRGDYLGKTVQVIPHITNEIQAFIERGAASATCGEPDVAIVEIGGTVGDIESLPFLEAARQMSLRLGRNSACFVHLTLVPYVATAGELKTKPTQHSVQKLREIGILPHVLLCRADRRIPDDESKKISMFSNVPEDAVISVWDADSIYKIPQMLHDQGLDRIICEELKLSPKDADLSMWSELVEKLENPKHEVTIGMVGKYVDLTESYKSLIEALRHASLHTSTRVNIEYIDSEEIETNGVDSLKHLDAVLVPGGFGRRGTEGKIAAIRYARESKVPYLGICLGMQLAVIEFARDVVGLKQANSTEFDPETPERVVALITEWYDRDGKVETRTEESDLGGTMRLGSQRCPIKPGTMAEEIYGKDVNERHRHRYEVNNRFVPQLEAGGLIISARTPSEDLPEMMELPRSMHPWFVGVQFHPEFTSTPRDGHPLFKSFVEAALANKQARGVKA.

Positions 1–270 are amidoligase domain; the sequence is MTKYVFVTGG…DRIICEELKL (270 aa). Residue S13 coordinates CTP. Residue S13 participates in UTP binding. ATP is bound by residues 14 to 19 and D71; that span reads SLGKGI. Mg(2+) is bound by residues D71 and E144. CTP-binding positions include 151 to 153, 191 to 196, and K227; these read DIE and KTKPTQ. UTP is bound by residues 191 to 196 and K227; that span reads KTKPTQ. A Glutamine amidotransferase type-1 domain is found at 295-547; sequence TIGMVGKYVD…VEAALANKQA (253 aa). G356 provides a ligand contact to L-glutamine. C383 functions as the Nucleophile; for glutamine hydrolysis in the catalytic mechanism. L-glutamine contacts are provided by residues 384-387, E407, and R473; that span reads LGMQ. Catalysis depends on residues H520 and E522.

The protein belongs to the CTP synthase family. In terms of assembly, homotetramer.

The enzyme catalyses UTP + L-glutamine + ATP + H2O = CTP + L-glutamate + ADP + phosphate + 2 H(+). It catalyses the reaction L-glutamine + H2O = L-glutamate + NH4(+). The catalysed reaction is UTP + NH4(+) + ATP = CTP + ADP + phosphate + 2 H(+). Its pathway is pyrimidine metabolism; CTP biosynthesis via de novo pathway; CTP from UDP: step 2/2. Allosterically activated by GTP, when glutamine is the substrate; GTP has no effect on the reaction when ammonia is the substrate. The allosteric effector GTP functions by stabilizing the protein conformation that binds the tetrahedral intermediate(s) formed during glutamine hydrolysis. Inhibited by the product CTP, via allosteric rather than competitive inhibition. Its function is as follows. Catalyzes the ATP-dependent amination of UTP to CTP with either L-glutamine or ammonia as the source of nitrogen. Regulates intracellular CTP levels through interactions with the four ribonucleotide triphosphates. The chain is CTP synthase from Burkholderia ambifaria (strain MC40-6).